Consider the following 108-residue polypeptide: Large ribosomal subunit protein uL23 (108 aa).

Belongs to the universal ribosomal protein uL23 family. As to quaternary structure, part of the 50S ribosomal subunit. Contacts protein L29, and trigger factor when it is bound to the ribosome.

In terms of biological role, one of the early assembly proteins it binds 23S rRNA. One of the proteins that surrounds the polypeptide exit tunnel on the outside of the ribosome. Forms the main docking site for trigger factor binding to the ribosome. This Polaromonas sp. (strain JS666 / ATCC BAA-500) protein is Large ribosomal subunit protein uL23.